Consider the following 671-residue polypeptide: DNA ligase (671 aa).

NAD(+) is bound by residues 32 to 36 (DAEYD), 81 to 82 (SL), and Glu113. Catalysis depends on Lys115, which acts as the N6-AMP-lysine intermediate. The NAD(+) site is built by Arg136, Glu173, Lys290, and Lys314. 4 residues coordinate Zn(2+): Cys408, Cys411, Cys426, and Cys432. A BRCT domain is found at 593–671 (EIDSPFAGKT…EAEMLRLLGS (79 aa)).

Belongs to the NAD-dependent DNA ligase family. LigA subfamily. The cofactor is Mg(2+). It depends on Mn(2+) as a cofactor.

It catalyses the reaction NAD(+) + (deoxyribonucleotide)n-3'-hydroxyl + 5'-phospho-(deoxyribonucleotide)m = (deoxyribonucleotide)n+m + AMP + beta-nicotinamide D-nucleotide.. In terms of biological role, DNA ligase that catalyzes the formation of phosphodiester linkages between 5'-phosphoryl and 3'-hydroxyl groups in double-stranded DNA using NAD as a coenzyme and as the energy source for the reaction. It is essential for DNA replication and repair of damaged DNA. This is DNA ligase from Shigella dysenteriae serotype 1 (strain Sd197).